Reading from the N-terminus, the 140-residue chain is Endoribonuclease YbeY (140 aa).

The Zn(2+) site is built by His-101, His-105, and His-111.

The protein belongs to the endoribonuclease YbeY family. Zn(2+) is required as a cofactor.

Its subcellular location is the cytoplasm. Single strand-specific metallo-endoribonuclease involved in late-stage 70S ribosome quality control and in maturation of the 3' terminus of the 16S rRNA. The chain is Endoribonuclease YbeY from Aliarcobacter butzleri (strain RM4018) (Arcobacter butzleri).